A 115-amino-acid chain; its full sequence is NADH-ubiquinone oxidoreductase chain 3 (115 aa).

3 helical membrane-spanning segments follow: residues 3 to 23 (FALI…ITFW), 55 to 75 (FFLV…LLPL), and 84 to 104 (LPLM…SLAY).

It belongs to the complex I subunit 3 family. Core subunit of respiratory chain NADH dehydrogenase (Complex I) which is composed of 45 different subunits. Interacts with TMEM186. Interacts with TMEM242.

The protein localises to the mitochondrion inner membrane. The enzyme catalyses a ubiquinone + NADH + 5 H(+)(in) = a ubiquinol + NAD(+) + 4 H(+)(out). Functionally, core subunit of the mitochondrial membrane respiratory chain NADH dehydrogenase (Complex I) which catalyzes electron transfer from NADH through the respiratory chain, using ubiquinone as an electron acceptor. Essential for the catalytic activity of complex I. This Gorilla gorilla gorilla (Western lowland gorilla) protein is NADH-ubiquinone oxidoreductase chain 3.